The sequence spans 566 residues: Erythroid membrane-associated protein (566 aa).

Residues 1–29 (MERPSPCGSWLVGCLFTIAVFQPPVQVLG) form the signal peptide. The Ig-like V-type domain occupies 30 to 139 (DAGKVYIAPL…SSREDNVTLQ (110 aa)). Residues 30–246 (DAGKVYIAPL…PERGSLSSPA (217 aa)) lie on the Extracellular side of the membrane. A disulfide bridge links C47 with C123. N135 and N214 each carry an N-linked (GlcNAc...) asparagine glycan. Residues 247–267 (VALSVVLPVLGLLILLGIWLI) traverse the membrane as a helical segment. The Cytoplasmic segment spans residues 268-566 (CKQKKSKEKL…ALKGLKVPSL (299 aa)). The B30.2/SPRY domain occupies 311–509 (KLKRAAANAG…LIICTELQKS (199 aa)). S509 carries the post-translational modification Phosphoserine.

This sequence belongs to the immunoglobulin superfamily. BTN/MOG family. Glycosylated. In terms of tissue distribution, expressed in spleen and bone marrow.

The protein resides in the cell membrane. It is found in the cytoplasm. Its function is as follows. Possible role as a cell-adhesion or receptor molecule of erythroid cells. The polypeptide is Erythroid membrane-associated protein (Ermap) (Mus musculus (Mouse)).